The sequence spans 741 residues: NAD(P)H-quinone oxidoreductase subunit 5, chloroplastic (741 aa).

The next 16 membrane-spanning stretches (helical) occupy residues 9-29, 40-60, 89-109, 125-145, 147-167, 185-205, 219-239, 258-278, 283-303, 327-347, 354-374, 396-416, 425-445, 549-569, 605-625, and 721-741; these read WIIP…LLLF, WAFQ…NLSI, IDPL…MVLI, FAYM…SNLI, IYIF…FWFT, GDFG…SFEF, NEVN…GAIA, TPIS…FLVA, LFIV…ITVF, LGYM…FHLI, ALLF…VGYC, NSFL…CFWS, WLYS…TAFY, LFPI…GIPF, FFSV…YKPV, and YLFF…FFNL.

It belongs to the complex I subunit 5 family. As to quaternary structure, NDH is composed of at least 16 different subunits, 5 of which are encoded in the nucleus.

The protein localises to the plastid. The protein resides in the chloroplast thylakoid membrane. The enzyme catalyses a plastoquinone + NADH + (n+1) H(+)(in) = a plastoquinol + NAD(+) + n H(+)(out). It carries out the reaction a plastoquinone + NADPH + (n+1) H(+)(in) = a plastoquinol + NADP(+) + n H(+)(out). NDH shuttles electrons from NAD(P)H:plastoquinone, via FMN and iron-sulfur (Fe-S) centers, to quinones in the photosynthetic chain and possibly in a chloroplast respiratory chain. The immediate electron acceptor for the enzyme in this species is believed to be plastoquinone. Couples the redox reaction to proton translocation, and thus conserves the redox energy in a proton gradient. The protein is NAD(P)H-quinone oxidoreductase subunit 5, chloroplastic (ndhF) of Cichorium intybus (Chicory).